Reading from the N-terminus, the 261-residue chain is uncharacterized protein (261 aa).

Residues Ile-33, Asp-78, and Asn-105 each coordinate NADP(+). Residue Ser-157 is the Proton donor of the active site. NADP(+)-binding residues include Tyr-172, Lys-176, and Ser-206. Tyr-172 (proton acceptor) is an active-site residue. Lys-176 serves as the catalytic Lowers pKa of active site Tyr.

Belongs to the short-chain dehydrogenases/reductases (SDR) family.

Its subcellular location is the cytoplasm. The protein localises to the nucleus. This is an uncharacterized protein from Schizosaccharomyces pombe (strain 972 / ATCC 24843) (Fission yeast).